Consider the following 309-residue polypeptide: Ribonuclease Z (309 aa).

His63, His65, Asp67, His68, His141, Asp212, and His270 together coordinate Zn(2+). Asp67 (proton acceptor) is an active-site residue.

It belongs to the RNase Z family. In terms of assembly, homodimer. Zn(2+) is required as a cofactor.

The catalysed reaction is Endonucleolytic cleavage of RNA, removing extra 3' nucleotides from tRNA precursor, generating 3' termini of tRNAs. A 3'-hydroxy group is left at the tRNA terminus and a 5'-phosphoryl group is left at the trailer molecule.. In terms of biological role, zinc phosphodiesterase, which displays some tRNA 3'-processing endonuclease activity. Probably involved in tRNA maturation, by removing a 3'-trailer from precursor tRNA. The protein is Ribonuclease Z of Lactobacillus johnsonii (strain CNCM I-12250 / La1 / NCC 533).